The primary structure comprises 208 residues: FMN-dependent NADH:quinone oxidoreductase 1 (208 aa).

This sequence belongs to the azoreductase type 1 family. As to quaternary structure, homodimer. It depends on FMN as a cofactor.

It catalyses the reaction 2 a quinone + NADH + H(+) = 2 a 1,4-benzosemiquinone + NAD(+). It carries out the reaction N,N-dimethyl-1,4-phenylenediamine + anthranilate + 2 NAD(+) = 2-(4-dimethylaminophenyl)diazenylbenzoate + 2 NADH + 2 H(+). Its function is as follows. Quinone reductase that provides resistance to thiol-specific stress caused by electrophilic quinones. Also exhibits azoreductase activity. Catalyzes the reductive cleavage of the azo bond in aromatic azo compounds to the corresponding amines. The protein is FMN-dependent NADH:quinone oxidoreductase 1 of Bacillus thuringiensis subsp. konkukian (strain 97-27).